A 745-amino-acid polypeptide reads, in one-letter code: Elongation factor G, mitochondrial (745 aa).

A mitochondrion-targeting transit peptide spans 1 to 15; the sequence is MSLITRLLTASSPLR. One can recognise a tr-type G domain in the interval 40-317; it reads DKIRNIGISA…AVLEYLPNPG (278 aa). GTP is bound by residues 49 to 56, 116 to 120, and 170 to 173; these read AHIDSGKT, DTPGH, and NKLD.

It belongs to the TRAFAC class translation factor GTPase superfamily. Classic translation factor GTPase family. EF-G/EF-2 subfamily.

It is found in the mitochondrion. It functions in the pathway protein biosynthesis; polypeptide chain elongation. Functionally, mitochondrial GTPase that catalyzes the GTP-dependent ribosomal translocation step during translation elongation. During this step, the ribosome changes from the pre-translocational (PRE) to the post-translocational (POST) state as the newly formed A-site-bound peptidyl-tRNA and P-site-bound deacylated tRNA move to the P and E sites, respectively. Catalyzes the coordinated movement of the two tRNA molecules, the mRNA and conformational changes in the ribosome. Essential during development as it acts as a retrograde signal from mitochondria to the nucleus to slow down cell proliferation if mitochondrial energy output is low. The polypeptide is Elongation factor G, mitochondrial (ico) (Drosophila ananassae (Fruit fly)).